Consider the following 715-residue polypeptide: Probable serine/threonine-protein kinase MARK-B (715 aa).

Residues 24 to 37 (SCSSNSTTSSSSNS) show a composition bias toward low complexity. The tract at residues 24 to 65 (SCSSNSTTSSSSNSPKQNKVSPGYRNKPQQQQHKKGHKMGNY) is disordered. The Protein kinase domain maps to 65 to 320 (YLLGKTIGSG…LDEIKTHVWV (256 aa)). ATP-binding positions include 71–79 (IGSGTSSKV) and Lys94. Residue Asp187 is the Proton acceptor of the active site. The span at 335–344 (KVSDRLEKEQ) shows a compositional bias: basic and acidic residues. 2 disordered regions span residues 335 to 399 (KVSD…IPQN) and 446 to 530 (CSAP…HHST). Over residues 345-368 (QQQTPQHQQTQQQLQPQSQLQQHS) the composition is skewed to low complexity. Residues 381–399 (IGSNRPLNQSSPNLTIPQN) show a composition bias toward polar residues. Low complexity-rich tracts occupy residues 451–478 (SPHSISPQFISPSPSTSTTPPLSPLSVS) and 487–513 (SSNPNIGHIPNNNHNSLSSSQNNINTS). The span at 517 to 527 (QYHHHHHHQNH) shows a compositional bias: basic residues. A KA1 domain is found at 666-715 (LCPRNETINFEIEVCKVNGMDMYGIKFKRLSGDAWSYSSSCIKIVESLKL).

Belongs to the protein kinase superfamily. CAMK Ser/Thr protein kinase family. SNF1 subfamily.

The catalysed reaction is L-seryl-[protein] + ATP = O-phospho-L-seryl-[protein] + ADP + H(+). It catalyses the reaction L-threonyl-[protein] + ATP = O-phospho-L-threonyl-[protein] + ADP + H(+). This Dictyostelium discoideum (Social amoeba) protein is Probable serine/threonine-protein kinase MARK-B (mrkB).